We begin with the raw amino-acid sequence, 491 residues long: Glycogen synthase (491 aa).

Lys15 provides a ligand contact to ADP-alpha-D-glucose.

It belongs to the glycosyltransferase 1 family. Bacterial/plant glycogen synthase subfamily.

It catalyses the reaction [(1-&gt;4)-alpha-D-glucosyl](n) + ADP-alpha-D-glucose = [(1-&gt;4)-alpha-D-glucosyl](n+1) + ADP + H(+). The protein operates within glycan biosynthesis; glycogen biosynthesis. Its function is as follows. Synthesizes alpha-1,4-glucan chains using ADP-glucose. This is Glycogen synthase from Hydrogenovibrio crunogenus (strain DSM 25203 / XCL-2) (Thiomicrospira crunogena).